The primary structure comprises 157 residues: uncharacterized protein (157 aa).

4 helical membrane passes run 3–23 (IFSFFSADFWQANSLCFMFIS), 24–44 (AFLSATVLPGNSEVIFVALAV), 47–67 (LMLGSLFNVDILALILIATAG), and 105–125 (IALLLSWLPVVGDLFCAIAGW).

The protein to E.coli YqaA.

It localises to the cell membrane. This is an uncharacterized protein from Haemophilus influenzae (strain ATCC 51907 / DSM 11121 / KW20 / Rd).